The following is a 130-amino-acid chain: MASVDVSQNTSDIHFSVSAADKVAELIKEEDNSNLNLRVSITGGGCSGFQYGFSFDEQINDDDTIIIQQCSDGKSSVKLLIDSMSYQYLHDAEIDYIKGIQGEQFVIRNPNAKTTCGCGSSFSIGDEDVL.

Residues Cys-46, Cys-116, and Cys-118 each coordinate iron-sulfur cluster.

This sequence belongs to the HesB/IscA family. Homodimer. The cofactor is iron-sulfur cluster.

Required for insertion of 4Fe-4S clusters for at least IspG. The chain is Iron-sulfur cluster insertion protein ErpA from Legionella pneumophila (strain Paris).